A 572-amino-acid polypeptide reads, in one-letter code: Urease subunit alpha (572 aa).

The Urease domain occupies 134–572; the sequence is GGIDSHIHFI…LPLTQRYFLF (439 aa). Residues H139, H141, and K222 each contribute to the Ni(2+) site. K222 bears the N6-carboxylysine mark. Residue H224 participates in substrate binding. The Ni(2+) site is built by H251 and H277. Catalysis depends on H325, which acts as the Proton donor. D365 contacts Ni(2+).

This sequence belongs to the metallo-dependent hydrolases superfamily. Urease alpha subunit family. Heterotrimer of UreA (gamma), UreB (beta) and UreC (alpha) subunits. Three heterotrimers associate to form the active enzyme. The cofactor is Ni cation. Carboxylation allows a single lysine to coordinate two nickel ions.

The protein resides in the cytoplasm. It carries out the reaction urea + 2 H2O + H(+) = hydrogencarbonate + 2 NH4(+). Its pathway is nitrogen metabolism; urea degradation; CO(2) and NH(3) from urea (urease route): step 1/1. This is Urease subunit alpha from Variovorax paradoxus (strain S110).